A 714-amino-acid chain; its full sequence is MGEPPRRPRELFLAGLAAAYLAAFVSLYLQIPGLYGRDGILPARRVLRLSGKGLWEQLRDVPTLLWLGPQLGLDTEQGMELLCLLGAVASMGALLCAPLRDCLLFAVLRVFYLSLYQVGQVFLYFQWDSLLLEAGFLAVLVAPLRLFKWRSTAWRPHDSVTFWLVRWLLFRLMFASGVVKLTSRCPTWWGLTALTYHYETQCIPTPAAWYAHQLPVWFQKFSVVATYVIEIAVPLLFFMPIRRLRLFAFYCQVLLQILIILTGNYNFFNALTIVLAFSLLDEEHMGRWMGRGKRKHGSSAWPPTLLSFLSTLLELATYALLLYWSVHYFSLEIDWEKGLLESKVAFTYHEFTQWLRAVTLPLVGLGFLSLSWEILSALYRCACVRGFFWKLWATLQWAVFATATVGMFAISLVPFTYIDYESNGKLWPGIHQMFSAVERFQVVNSYGLFRRMTGVGGRPEVVLEGSYDKQSWTEIEFMYKPGNVSAAPAVVAPHQPRLDWQMWFAALAHHSSSPWFASFVHRLLQGKEDVIRLVQVDEDKYPFSTQPPVYLRAQLYKYWFTHSAESGAGAAQWWRRQHVQEFFPTVSVGDPTLDGLLAQHGLKDKLPLKRPVDAFLPWLLSSVRQLSRPFSPHVVLWSLYVVAATTCLLRAMARRPRGGAPPTRHKAPKQPRGDQGEKNGQLRRKEGREAEERGEGRSRGAADGEGPRGTKRRK.

The next 9 helical transmembrane spans lie at 11 to 31 (LFLA…YLQI), 79 to 99 (MELL…CAPL), 103 to 125 (LLFA…FLYF), 159 to 179 (SVTF…SGVV), 221 to 241 (FSVV…FMPI), 257 to 277 (ILII…VLAF), 304 to 324 (TLLS…LLYW), 358 to 378 (VTLP…LSAL), and 398 to 418 (AVFA…FTYI). Asparagine 483 carries N-linked (GlcNAc...) asparagine glycosylation. Residues 629–649 (PFSPHVVLWSLYVVAATTCLL) form a helical membrane-spanning segment. Residues 654-669 (RRPRGGAPPTRHKAPK) show a composition bias toward basic residues. The interval 654–714 (RRPRGGAPPT…EGPRGTKRRK (61 aa)) is disordered. Basic and acidic residues predominate over residues 683 to 708 (RRKEGREAEERGEGRSRGAADGEGPR).

The protein belongs to the lipase maturation factor family.

The protein resides in the endoplasmic reticulum membrane. In terms of biological role, involved in the maturation of specific proteins in the endoplasmic reticulum. May be required for maturation and transport of active lipoprotein lipase (LPL) through the secretory pathway. This chain is Lipase maturation factor 2 (LMF2), found in Gallus gallus (Chicken).